We begin with the raw amino-acid sequence, 152 residues long: uncharacterized protein (152 aa).

This is an uncharacterized protein from Homo sapiens (Human).